Here is a 444-residue protein sequence, read N- to C-terminus: Trigger factor (444 aa).

The PPIase FKBP-type domain occupies 170-255; the sequence is NDIAVIDFVG…LKAIKQLEIT (86 aa).

The protein belongs to the FKBP-type PPIase family. Tig subfamily.

Its subcellular location is the cytoplasm. The catalysed reaction is [protein]-peptidylproline (omega=180) = [protein]-peptidylproline (omega=0). Its function is as follows. Involved in protein export. Acts as a chaperone by maintaining the newly synthesized protein in an open conformation. Functions as a peptidyl-prolyl cis-trans isomerase. The sequence is that of Trigger factor (tig) from Mycoplasma pneumoniae (strain ATCC 29342 / M129 / Subtype 1) (Mycoplasmoides pneumoniae).